Reading from the N-terminus, the 100-residue chain is UPF0213 protein YhbQ (100 aa).

The region spanning 2–77 (TPWFLYLIRT…KQLTKRQKER (76 aa)) is the GIY-YIG domain.

The protein belongs to the UPF0213 family.

This is UPF0213 protein YhbQ from Escherichia coli O7:K1 (strain IAI39 / ExPEC).